A 403-amino-acid chain; its full sequence is Argininosuccinate synthase 1 (403 aa).

Residues 10–18 and A37 each bind ATP; that span reads SYSGGLDTS. L-citrulline is bound by residues Y88 and S93. G118 serves as a coordination point for ATP. 3 residues coordinate L-aspartate: T120, N124, and D125. N124 lines the L-citrulline pocket. Residues R128, S179, S188, E264, and Y276 each coordinate L-citrulline.

This sequence belongs to the argininosuccinate synthase family. Type 1 subfamily. As to quaternary structure, homotetramer.

The protein localises to the cytoplasm. It catalyses the reaction L-citrulline + L-aspartate + ATP = 2-(N(omega)-L-arginino)succinate + AMP + diphosphate + H(+). It functions in the pathway amino-acid biosynthesis; L-arginine biosynthesis; L-arginine from L-ornithine and carbamoyl phosphate: step 2/3. The sequence is that of Argininosuccinate synthase 1 from Rhizobium johnstonii (strain DSM 114642 / LMG 32736 / 3841) (Rhizobium leguminosarum bv. viciae).